Here is a 325-residue protein sequence, read N- to C-terminus: Diacylglycerol acyltransferase/mycolyltransferase Ag85B (325 aa).

A signal peptide spans 1–38 (MTFIDKIRGHWARRMTVAAVAALLLPGLVGVVGGSATA). Residue 82-83 (LR) coordinates substrate. The segment at 98-108 (FEMFLDSGLSV) is fibronectin-binding. Residues cysteine 127 and cysteine 132 are joined by a disulfide bond. Residue serine 166 coordinates substrate. The active-site Nucleophile is the serine 166. Glutamate 272 is an active-site residue. Substrate contacts are provided by residues 274 to 277 (LTIR) and 304 to 306 (HNW). Residue histidine 304 is part of the active site.

Belongs to the mycobacterial A85 antigen family.

The protein localises to the secreted. The catalysed reaction is 2 alpha,alpha'-trehalose 6-mycolate = alpha,alpha'-trehalose 6,6'-bismycolate + alpha,alpha-trehalose. It catalyses the reaction an acyl-CoA + a 1,2-diacyl-sn-glycerol = a triacyl-sn-glycerol + CoA. The antigen 85 proteins (FbpA, FbpB, FbpC) are responsible for the high affinity of mycobacteria for fibronectin, a large adhesive glycoprotein. They also help to maintain the integrity of the cell wall by catalyzing the transfer of mycolic acids to cell wall arabinogalactan and through the synthesis of alpha,alpha-trehalose dimycolate (TDM, cord factor). They catalyze the transfer of a mycoloyl residue from one molecule of alpha,alpha-trehalose monomycolate (TMM) to another TMM, leading to the formation of TDM. The protein is Diacylglycerol acyltransferase/mycolyltransferase Ag85B (fbpB) of Mycolicibacterium smegmatis (strain ATCC 700084 / mc(2)155) (Mycobacterium smegmatis).